A 504-amino-acid chain; its full sequence is Sperm motility kinase 3A (504 aa).

Positions 28 to 276 constitute a Protein kinase domain; that stretch reads YVMLETIGHG…VAEVMVHPWV (249 aa). ATP is bound by residues 34 to 42 and lysine 57; that span reads IGHGGCATV. Aspartate 147 serves as the catalytic Proton acceptor. Positions 294 to 334 constitute a UBA domain; the sequence is KPDPAIVKAMGHIGFQAQDIEDSLRQRKFNQTMASYCLLKK. Disordered regions lie at residues 389–421 and 441–468; these read VCGKSTSKKRDRRVSWPSVLGRPRHTAPTMDHT and NSSEESTQGHTRASAADKPVHSRGWPRG. Positions 441–451 are enriched in polar residues; the sequence is NSSEESTQGHT.

The protein belongs to the protein kinase superfamily. CAMK Ser/Thr protein kinase family. Smok subfamily. As to expression, testis-specific. Expressed in the testis from 22 days postpartum (22 dpp).

The enzyme catalyses L-seryl-[protein] + ATP = O-phospho-L-seryl-[protein] + ADP + H(+). It carries out the reaction L-threonyl-[protein] + ATP = O-phospho-L-threonyl-[protein] + ADP + H(+). Its function is as follows. May play a role in sperm motility, especially in the regulation of flagellar function. The sequence is that of Sperm motility kinase 3A from Mus musculus (Mouse).